The chain runs to 548 residues: LDL receptor repeat-containing protein egg-2 (548 aa).

The Cytoplasmic segment spans residues methionine 1–alanine 49. A helical; Signal-anchor for type II membrane protein membrane pass occupies residues isoleucine 50–phenylalanine 70. Residues leucine 71 to proline 548 lie on the Extracellular side of the membrane. Asparagine 119 carries N-linked (GlcNAc...) asparagine glycosylation. LDL-receptor class A domains lie at threonine 122–lysine 160, glutamate 161–arginine 213, lysine 215–asparagine 252, lysine 253–aspartate 288, threonine 291–proline 328, lysine 370–threonine 412, glutamate 416–aspartate 454, and lysine 455–serine 492. Disulfide bonds link cysteine 130-cysteine 150, cysteine 144-cysteine 159, cysteine 162-cysteine 190, cysteine 168-cysteine 203, cysteine 197-cysteine 212, cysteine 216-cysteine 229, cysteine 223-cysteine 242, cysteine 236-cysteine 251, cysteine 254-cysteine 265, cysteine 261-cysteine 278, cysteine 272-cysteine 287, cysteine 292-cysteine 305, cysteine 300-cysteine 318, cysteine 312-cysteine 327, cysteine 371-cysteine 389, cysteine 379-cysteine 402, cysteine 396-cysteine 411, cysteine 417-cysteine 431, cysteine 427-cysteine 444, cysteine 438-cysteine 453, cysteine 456-cysteine 469, cysteine 463-cysteine 482, and cysteine 476-cysteine 491. N-linked (GlcNAc...) asparagine glycosylation is present at asparagine 244. A glycan (N-linked (GlcNAc...) asparagine) is linked at asparagine 527.

The protein localises to the cell membrane. It is found in the endosome membrane. In terms of biological role, probable receptor which is required for the oocyte-to-zygote transition although its exact function is controversial. Redundantly with egg-1, seems to be required for fertilization probably by promoting the interaction or fusion between sperm and oocyte. Conversely, shown to be dispensable for fertilization but required together with egg-1 for the formation of a continuous and cohesive eggshell chitin layer by maintaining a homogenous distribution of chitin synthase chs-1 at the unfertilized oocyte cell membrane. Appears to recruit or maintain together to the unfertilized oocyte cortex several proteins including chs-1, kinase mbk-2 and pseudophosphatase egg-3, and possibly egg-4 and egg-5. The chain is LDL receptor repeat-containing protein egg-2 from Caenorhabditis elegans.